Reading from the N-terminus, the 71-residue chain is Ranatuerin-2P (71 aa).

The signal sequence occupies residues Met-1–Ser-20. A propeptide spanning residues Leu-21–Gly-44 is cleaved from the precursor. Cys-66 and Cys-71 form a disulfide bridge.

Expressed by the skin glands.

It localises to the secreted. Antibacterial activity against Gram-positive bacterium S.aureus and Gram-negative bacterium E.coli. Has activity against C.albicans. This chain is Ranatuerin-2P, found in Lithobates pipiens (Northern leopard frog).